The sequence spans 352 residues: Holliday junction branch migration complex subunit RuvB (352 aa).

Residues 4-185 (ADRLIAATGP…FGIVQRLEFY (182 aa)) form a large ATPase domain (RuvB-L) region. Residues Ile24, Arg25, Gly66, Lys69, Thr70, Thr71, 132 to 134 (EDF), Arg175, Tyr185, and Arg222 contribute to the ATP site. Thr70 provides a ligand contact to Mg(2+). The tract at residues 186-256 (STADLATIVS…VADLALNLLD (71 aa)) is small ATPAse domain (RuvB-S). The segment at 259 to 352 (EHGFDHQDRR…VDEFLDAVDD (94 aa)) is head domain (RuvB-H). The DNA site is built by Arg295, Arg314, and Arg319.

Belongs to the RuvB family. As to quaternary structure, homohexamer. Forms an RuvA(8)-RuvB(12)-Holliday junction (HJ) complex. HJ DNA is sandwiched between 2 RuvA tetramers; dsDNA enters through RuvA and exits via RuvB. An RuvB hexamer assembles on each DNA strand where it exits the tetramer. Each RuvB hexamer is contacted by two RuvA subunits (via domain III) on 2 adjacent RuvB subunits; this complex drives branch migration. In the full resolvosome a probable DNA-RuvA(4)-RuvB(12)-RuvC(2) complex forms which resolves the HJ.

The protein localises to the cytoplasm. It carries out the reaction ATP + H2O = ADP + phosphate + H(+). Functionally, the RuvA-RuvB-RuvC complex processes Holliday junction (HJ) DNA during genetic recombination and DNA repair, while the RuvA-RuvB complex plays an important role in the rescue of blocked DNA replication forks via replication fork reversal (RFR). RuvA specifically binds to HJ cruciform DNA, conferring on it an open structure. The RuvB hexamer acts as an ATP-dependent pump, pulling dsDNA into and through the RuvAB complex. RuvB forms 2 homohexamers on either side of HJ DNA bound by 1 or 2 RuvA tetramers; 4 subunits per hexamer contact DNA at a time. Coordinated motions by a converter formed by DNA-disengaged RuvB subunits stimulates ATP hydrolysis and nucleotide exchange. Immobilization of the converter enables RuvB to convert the ATP-contained energy into a lever motion, pulling 2 nucleotides of DNA out of the RuvA tetramer per ATP hydrolyzed, thus driving DNA branch migration. The RuvB motors rotate together with the DNA substrate, which together with the progressing nucleotide cycle form the mechanistic basis for DNA recombination by continuous HJ branch migration. Branch migration allows RuvC to scan DNA until it finds its consensus sequence, where it cleaves and resolves cruciform DNA. This chain is Holliday junction branch migration complex subunit RuvB, found in Pseudomonas fluorescens (strain SBW25).